The sequence spans 182 residues: Dipetalodipin (182 aa).

An N-terminal signal peptide occupies residues 1–18; it reads MKTIIAAIFLGILMHAFA. Intrachain disulfides connect C21/C134, C55/C181, and C87/C103.

It belongs to the calycin superfamily. Triabin family. As to expression, expressed in salivary glands.

The protein resides in the secreted. Inhibits platelet aggregation, vasoconstriction, and angiogenesis through binding to distinct eicosanoids involved in inflammation (acts as a scavenger), and has a role in inhibiting host innate immunity by impairing platelet-assisted formation of neutrophil extracellular traps (NETs). Inhibits platelet aggregation by collagen (IC(50)=30 nM), thromboxane A2 mimetic (TXA2 mimetic), or arachidonic acid (AA) without affecting aggregation induced by ADP, convulxin (GP6 agonist), PMA, and ristocetin (vWF-dependent platelet agglutinator). Binds with high affinity to TXA2, TXB2, prostaglandine H2 mimetic (PGH2 mimetic), PGD2, PGJ2, and PGF2alpha. Also interacts with 15(S)-hydroxyeicosatetraenoic acid (HETE), being the first calycin/lipocalin described to date to bind to a derivative of 15-lipoxygenase. Binding is not observed to other prostaglandins, leukotrienes, HETEs, lipids, and biogenic amines. It prevents contraction of rat uterus stimulated by PGF2alpha and induces relaxation of aorta previously contracted with TXA2 mimetic. In addition, it inhibits angiogenesis mediated by 15(S)-HETE and does not enhance inhibition of collagen-induced platelet aggregation by SQ29548 (TXA2 antagonist) and indomethacin. Also impairs platelet-assisted formation of neutrophil extracellular traps (NETs). NETs are web-like structures of DNA and proteins that play an important role in killing of pathogens. In addition, NETs are implicated in thrombus formation. In vivo, this protein exhibits antithrombotic activity in two distinct mice models that are highly dependent on platelets. It is noteworthy that it inhibits thrombosis without promoting excessive bleeding. This Dipetalogaster maximus (Blood-sucking bug) protein is Dipetalodipin.